Consider the following 261-residue polypeptide: 3-methyl-2-oxobutanoate hydroxymethyltransferase (261 aa).

Residues Asp-44 and Asp-83 each contribute to the Mg(2+) site. 3-methyl-2-oxobutanoate is bound by residues 44 to 45, Asp-83, and Lys-113; that span reads DS. Glu-115 is a binding site for Mg(2+). Glu-183 (proton acceptor) is an active-site residue.

It belongs to the PanB family. In terms of assembly, homodecamer; pentamer of dimers. Mg(2+) is required as a cofactor.

The protein localises to the cytoplasm. The catalysed reaction is 3-methyl-2-oxobutanoate + (6R)-5,10-methylene-5,6,7,8-tetrahydrofolate + H2O = 2-dehydropantoate + (6S)-5,6,7,8-tetrahydrofolate. It participates in cofactor biosynthesis; (R)-pantothenate biosynthesis; (R)-pantoate from 3-methyl-2-oxobutanoate: step 1/2. Functionally, catalyzes the reversible reaction in which hydroxymethyl group from 5,10-methylenetetrahydrofolate is transferred onto alpha-ketoisovalerate to form ketopantoate. The polypeptide is 3-methyl-2-oxobutanoate hydroxymethyltransferase (Cyanothece sp. (strain PCC 7425 / ATCC 29141)).